The sequence spans 464 residues: tRNA-2-methylthio-N(6)-dimethylallyladenosine synthase (464 aa).

Residues 19–135 (GSYWITTFGC…LENLLERVDS (117 aa)) form the MTTase N-terminal domain. 6 residues coordinate [4Fe-4S] cluster: Cys28, Cys64, Cys98, Cys170, Cys174, and Cys177. One can recognise a Radical SAM core domain in the interval 156–393 (RDSTICGWVN…NELVEATSRK (238 aa)). In terms of domain architecture, TRAM spans 396-464 (QRYLNNTESV…SFSLSGQIYK (69 aa)).

Belongs to the methylthiotransferase family. MiaB subfamily. As to quaternary structure, monomer. Requires [4Fe-4S] cluster as cofactor.

The protein resides in the cytoplasm. It carries out the reaction N(6)-dimethylallyladenosine(37) in tRNA + (sulfur carrier)-SH + AH2 + 2 S-adenosyl-L-methionine = 2-methylsulfanyl-N(6)-dimethylallyladenosine(37) in tRNA + (sulfur carrier)-H + 5'-deoxyadenosine + L-methionine + A + S-adenosyl-L-homocysteine + 2 H(+). Catalyzes the methylthiolation of N6-(dimethylallyl)adenosine (i(6)A), leading to the formation of 2-methylthio-N6-(dimethylallyl)adenosine (ms(2)i(6)A) at position 37 in tRNAs that read codons beginning with uridine. The polypeptide is tRNA-2-methylthio-N(6)-dimethylallyladenosine synthase (Prochlorococcus marinus (strain MIT 9515)).